A 101-amino-acid polypeptide reads, in one-letter code: Putative septation protein SpoVG (101 aa).

Belongs to the SpoVG family.

Its function is as follows. Could be involved in septation. The chain is Putative septation protein SpoVG from Anaeromyxobacter dehalogenans (strain 2CP-C).